The primary structure comprises 622 residues: Chaperone protein HtpG (622 aa).

The a; substrate-binding stretch occupies residues 1-322 (MTEAKNYEFQ…SEDLPLNISR (322 aa)). Positions 323–539 (QSLQDNALVS…DGFMSASMER (217 aa)) are b. Residues 540 to 622 (VLAASRKEQG…KILDRAVSRA (83 aa)) form a c region.

Belongs to the heat shock protein 90 family. In terms of assembly, homodimer.

It is found in the cytoplasm. In terms of biological role, molecular chaperone. Has ATPase activity. The protein is Chaperone protein HtpG of Desulfotalea psychrophila (strain LSv54 / DSM 12343).